The primary structure comprises 139 residues: Protein archease (139 aa).

D12, D138, and I139 together coordinate Ca(2+).

Belongs to the archease family.

In terms of biological role, activates the tRNA-splicing ligase complex by facilitating the enzymatic turnover of catalytic subunit RtcB. Acts by promoting the guanylylation of RtcB, a key intermediate step in tRNA ligation. Can also alter the NTP specificity of RtcB such that ATP, dGTP or ITP is used efficiently. This chain is Protein archease, found in Saccharolobus islandicus (strain M.16.27) (Sulfolobus islandicus).